Reading from the N-terminus, the 152-residue chain is TOMM20-like protein 1 (152 aa).

Over 1 to 9 (MPSVRSLLR) the chain is Mitochondrial intermembrane. The chain crosses the membrane as a helical span at residues 10–29 (LLAAAAACGAFAFLGYCIYL). At 30 to 152 (NRKRRGDPAF…EQDCLEDDPD (123 aa)) the chain is on the cytoplasmic side. The disordered stretch occupies residues 43–62 (LRDKRRAEPQKAEEQGTQLW). Over residues 47–56 (RRAEPQKAEE) the composition is skewed to basic and acidic residues.

Belongs to the Tom20 family.

Its subcellular location is the mitochondrion outer membrane. The protein is TOMM20-like protein 1 (TOMM20L) of Homo sapiens (Human).